The following is a 188-amino-acid chain: Peroxynitrite isomerase (188 aa).

The GXWXGXG signature appears at 35–41 (GTWRGEG). His-178 provides a ligand contact to heme b.

This sequence belongs to the nitrobindin family. As to quaternary structure, homodimer. Requires heme b as cofactor.

The enzyme catalyses peroxynitrite = nitrate. The protein operates within nitrogen metabolism. In terms of biological role, heme-binding protein able to scavenge peroxynitrite and to protect free L-tyrosine against peroxynitrite-mediated nitration, by acting as a peroxynitrite isomerase that converts peroxynitrite to nitrate. Therefore, this protein likely plays a role in peroxynitrite sensing and in the detoxification of reactive nitrogen and oxygen species (RNS and ROS, respectively). Is able to bind nitric oxide (NO) in vitro, but may act as a sensor of peroxynitrite levels in vivo. In Frankia casuarinae (strain DSM 45818 / CECT 9043 / HFP020203 / CcI3), this protein is Peroxynitrite isomerase.